A 480-amino-acid polypeptide reads, in one-letter code: Protein DETOXIFICATION 15 (480 aa).

12 helical membrane passes run 36–56 (GPLIAVSLLQFCLQIISVMFV), 69–89 (IATSFASVTGFTFLMGTASAM), 118–138 (LLSVPLSIVWANTEHFLVFFG), 143–163 (IAHLSGSYARFMIPSIFAYGL), 180–200 (VVICSGVTTSLHVIICWVLVL), 208–228 (GAAVANAISYWLNVILLSCYV), 255–275 (LVIPSAFMVCSLEMWSFELLV), 294–314 (VWMIPFGLSGAASTRVSNELG), 326–346 (RVVLSFSIVESILVGTVLILI), 360–380 (VVSHVASMLPILALGHSLDSF), 396–416 (IGAFVNLGSYYLVGVPFGLLL), and 428–448 (WLGIICALIVQGVCLSLITFF).

This sequence belongs to the multi antimicrobial extrusion (MATE) (TC 2.A.66.1) family.

It localises to the membrane. The sequence is that of Protein DETOXIFICATION 15 from Arabidopsis thaliana (Mouse-ear cress).